The following is a 335-amino-acid chain: 3-hydroxyproline 2-epimerase (335 aa).

Cys91 acts as the Proton acceptor in catalysis. Residues 92–93 (GH), Asp251, and 256–257 (GS) each bind substrate.

It belongs to the proline racemase family.

It catalyses the reaction trans-3-hydroxy-L-proline = cis-3-hydroxy-D-proline. The enzyme catalyses trans-4-hydroxy-L-proline = cis-4-hydroxy-D-proline. Catalyzes the epimerization of trans-3-hydroxy-L-proline (t3LHyp) to cis-3-hydroxy-D-proline (c3DHyp) in vitro. Can also catalyze the epimerization of trans-4-hydroxy-L-proline (t3LHyp) to cis-4-hydroxy-D-proline (c4DHyp), albeit with 3.6-fold lower efficiency. Displays no proline racemase activity. The chain is 3-hydroxyproline 2-epimerase from Burkholderia multivorans (strain ATCC 17616 / 249).